The following is a 107-amino-acid chain: Large ribosomal subunit protein eL33B (107 aa).

Alanine 2 carries the N-acetylalanine; partial modification. Lysine 47 is covalently cross-linked (Glycyl lysine isopeptide (Lys-Gly) (interchain with G-Cter in ubiquitin)).

The protein belongs to the eukaryotic ribosomal protein eL33 family. Component of the large ribosomal subunit (LSU). Mature yeast ribosomes consist of a small (40S) and a large (60S) subunit. The 40S small subunit contains 1 molecule of ribosomal RNA (18S rRNA) and 33 different proteins (encoded by 57 genes). The large 60S subunit contains 3 rRNA molecules (25S, 5.8S and 5S rRNA) and 46 different proteins (encoded by 81 genes). N-terminally acetylated by acetyltransferase NatA.

The protein resides in the cytoplasm. Its function is as follows. Component of the ribosome, a large ribonucleoprotein complex responsible for the synthesis of proteins in the cell. The small ribosomal subunit (SSU) binds messenger RNAs (mRNAs) and translates the encoded message by selecting cognate aminoacyl-transfer RNA (tRNA) molecules. The large subunit (LSU) contains the ribosomal catalytic site termed the peptidyl transferase center (PTC), which catalyzes the formation of peptide bonds, thereby polymerizing the amino acids delivered by tRNAs into a polypeptide chain. The nascent polypeptides leave the ribosome through a tunnel in the LSU and interact with protein factors that function in enzymatic processing, targeting, and the membrane insertion of nascent chains at the exit of the ribosomal tunnel. This chain is Large ribosomal subunit protein eL33B, found in Saccharomyces cerevisiae (strain ATCC 204508 / S288c) (Baker's yeast).